The following is a 354-amino-acid chain: Probable butyrate kinase (354 aa).

It belongs to the acetokinase family.

The protein resides in the cytoplasm. The enzyme catalyses butanoate + ATP = butanoyl phosphate + ADP. The chain is Probable butyrate kinase from Phocaeicola vulgatus (strain ATCC 8482 / DSM 1447 / JCM 5826 / CCUG 4940 / NBRC 14291 / NCTC 11154) (Bacteroides vulgatus).